The following is a 184-amino-acid chain: Dynactin subunit 6 (184 aa).

The protein belongs to the dynactin subunits 5/6 family. Dynactin subunit 6 subfamily. In terms of assembly, subunit of dynactin, a multiprotein complex part of a tripartite complex with dynein and a adapter, such as BICDL1, BICD2 or HOOK3. The dynactin complex is built around ACTR1A/ACTB filament and consists of an actin-related filament composed of a shoulder domain, a pointed end and a barbed end.

The protein resides in the cytoplasm. It is found in the cytoskeleton. Functionally, part of the dynactin complex that activates the molecular motor dynein for ultra-processive transport along microtubules. This is Dynactin subunit 6 (dctn6) from Nematostella vectensis (Starlet sea anemone).